Consider the following 92-residue polypeptide: Putative protein pog (92 aa).

The sequence is that of Putative protein pog from Acute bee paralysis virus (strain Rothamsted) (ABPV).